A 263-amino-acid polypeptide reads, in one-letter code: Endonuclease 8 (263 aa).

P2 functions as the Schiff-base intermediate with DNA in the catalytic mechanism. E3 acts as the Proton donor in catalysis. The Proton donor; for beta-elimination activity role is filled by K53. Residues Q70, R125, and N169 each contribute to the DNA site. The FPG-type zinc finger occupies 229 to 263 (KVFHRDGEACERCGGIIEKTTLSSRPFYWCPHCQK). R253 acts as the Proton donor; for delta-elimination activity in catalysis.

The protein belongs to the FPG family. It depends on Zn(2+) as a cofactor.

The enzyme catalyses 2'-deoxyribonucleotide-(2'-deoxyribose 5'-phosphate)-2'-deoxyribonucleotide-DNA = a 3'-end 2'-deoxyribonucleotide-(2,3-dehydro-2,3-deoxyribose 5'-phosphate)-DNA + a 5'-end 5'-phospho-2'-deoxyribonucleoside-DNA + H(+). Its function is as follows. Involved in base excision repair of DNA damaged by oxidation or by mutagenic agents. Acts as a DNA glycosylase that recognizes and removes damaged bases. Has a preference for oxidized pyrimidines, such as thymine glycol, 5,6-dihydrouracil and 5,6-dihydrothymine. Has AP (apurinic/apyrimidinic) lyase activity and introduces nicks in the DNA strand. Cleaves the DNA backbone by beta-delta elimination to generate a single-strand break at the site of the removed base with both 3'- and 5'-phosphates. This Salmonella arizonae (strain ATCC BAA-731 / CDC346-86 / RSK2980) protein is Endonuclease 8.